The following is an 83-amino-acid chain: Cytochrome b559 subunit alpha (83 aa).

The helical transmembrane segment at 22–36 (VIHSITIPALFIAGW) threads the bilayer. Position 24 (His24) interacts with heme.

This sequence belongs to the PsbE/PsbF family. As to quaternary structure, heterodimer of an alpha subunit and a beta subunit. PSII is composed of 1 copy each of membrane proteins PsbA, PsbB, PsbC, PsbD, PsbE, PsbF, PsbH, PsbI, PsbJ, PsbK, PsbL, PsbM, PsbT, PsbX, PsbY, PsbZ, Psb30/Ycf12, peripheral proteins PsbO, CyanoQ (PsbQ), PsbU, PsbV and a large number of cofactors. It forms dimeric complexes. It depends on heme b as a cofactor.

The protein localises to the cellular thylakoid membrane. Its function is as follows. This b-type cytochrome is tightly associated with the reaction center of photosystem II (PSII). PSII is a light-driven water:plastoquinone oxidoreductase that uses light energy to abstract electrons from H(2)O, generating O(2) and a proton gradient subsequently used for ATP formation. It consists of a core antenna complex that captures photons, and an electron transfer chain that converts photonic excitation into a charge separation. The polypeptide is Cytochrome b559 subunit alpha (Synechococcus elongatus (strain ATCC 33912 / PCC 7942 / FACHB-805) (Anacystis nidulans R2)).